The primary structure comprises 284 residues: Diaminopimelate epimerase (284 aa).

The substrate site is built by Asn-14 and Asn-67. Cys-76 (proton donor) is an active-site residue. Substrate is bound by residues 77 to 78, Asn-166, Asn-199, and 217 to 218; these read GN and ER. Cys-226 (proton acceptor) is an active-site residue. Position 227-228 (227-228) interacts with substrate; the sequence is GT.

The protein belongs to the diaminopimelate epimerase family. Homodimer.

It localises to the cytoplasm. It carries out the reaction (2S,6S)-2,6-diaminopimelate = meso-2,6-diaminopimelate. Its pathway is amino-acid biosynthesis; L-lysine biosynthesis via DAP pathway; DL-2,6-diaminopimelate from LL-2,6-diaminopimelate: step 1/1. Its function is as follows. Catalyzes the stereoinversion of LL-2,6-diaminopimelate (L,L-DAP) to meso-diaminopimelate (meso-DAP), a precursor of L-lysine and an essential component of the bacterial peptidoglycan. This is Diaminopimelate epimerase from Bacillus subtilis (strain 168).